A 514-amino-acid polypeptide reads, in one-letter code: Beta-glucosidase 16 (514 aa).

The first 21 residues, 1–21, serve as a signal peptide directing secretion; that stretch reads MRGKFLSLLLLITLACIGVSA. Q49 contributes to the a beta-D-glucoside binding site. The N-linked (GlcNAc...) asparagine glycan is linked to N80. A beta-D-glucoside contacts are provided by residues H153 and 198-199; that span reads NE. Residue E199 is the Proton donor of the active site. C218 and C226 are disulfide-bonded. Y343 provides a ligand contact to a beta-D-glucoside. A glycan (N-linked (GlcNAc...) asparagine) is linked at N357. Residues E413, W458, 465 to 466, and F474 each bind a beta-D-glucoside; that span reads EW. E413 (nucleophile) is an active-site residue.

This sequence belongs to the glycosyl hydrolase 1 family. As to expression, expressed at low levels in cauline leaves and flowers.

The enzyme catalyses Hydrolysis of terminal, non-reducing beta-D-glucosyl residues with release of beta-D-glucose.. The protein is Beta-glucosidase 16 of Arabidopsis thaliana (Mouse-ear cress).